Consider the following 398-residue polypeptide: 8-amino-7-oxononanoate synthase (398 aa).

Arg-23 lines the substrate pocket. 110–111 (GY) is a binding site for pyridoxal 5'-phosphate. His-135 contributes to the substrate binding site. Residues Ser-181, His-209, and Thr-237 each coordinate pyridoxal 5'-phosphate. An N6-(pyridoxal phosphate)lysine modification is found at Lys-240. Thr-354 is a binding site for substrate.

It belongs to the class-II pyridoxal-phosphate-dependent aminotransferase family. BioF subfamily. In terms of assembly, homodimer. The cofactor is pyridoxal 5'-phosphate.

The enzyme catalyses 6-carboxyhexanoyl-[ACP] + L-alanine + H(+) = (8S)-8-amino-7-oxononanoate + holo-[ACP] + CO2. It participates in cofactor biosynthesis; biotin biosynthesis. Catalyzes the decarboxylative condensation of pimeloyl-[acyl-carrier protein] and L-alanine to produce 8-amino-7-oxononanoate (AON), [acyl-carrier protein], and carbon dioxide. The sequence is that of 8-amino-7-oxononanoate synthase from Anaeromyxobacter sp. (strain K).